The chain runs to 485 residues: Glutamyl-tRNA(Gln) amidotransferase subunit A (485 aa).

Catalysis depends on charge relay system residues Lys79 and Ser154. The active-site Acyl-ester intermediate is Ser178.

It belongs to the amidase family. GatA subfamily. Heterotrimer of A, B and C subunits.

It carries out the reaction L-glutamyl-tRNA(Gln) + L-glutamine + ATP + H2O = L-glutaminyl-tRNA(Gln) + L-glutamate + ADP + phosphate + H(+). In terms of biological role, allows the formation of correctly charged Gln-tRNA(Gln) through the transamidation of misacylated Glu-tRNA(Gln) in organisms which lack glutaminyl-tRNA synthetase. The reaction takes place in the presence of glutamine and ATP through an activated gamma-phospho-Glu-tRNA(Gln). The polypeptide is Glutamyl-tRNA(Gln) amidotransferase subunit A (Staphylococcus aureus).